A 424-amino-acid chain; its full sequence is Homoserine O-succinyltransferase (424 aa).

In terms of domain architecture, AB hydrolase-1 spans 67–381 (NAVLVCHALN…PHGHDAFLLD (315 aa)). S173 acts as the Nucleophile in catalysis. Position 243 (R243) interacts with substrate. Catalysis depends on residues D342 and H375. D376 provides a ligand contact to substrate.

It belongs to the AB hydrolase superfamily. MetX family. As to quaternary structure, homodimer.

The protein resides in the cytoplasm. It catalyses the reaction L-homoserine + succinyl-CoA = O-succinyl-L-homoserine + CoA. Its pathway is amino-acid biosynthesis; L-methionine biosynthesis via de novo pathway; O-succinyl-L-homoserine from L-homoserine: step 1/1. In terms of biological role, transfers a succinyl group from succinyl-CoA to L-homoserine, forming succinyl-L-homoserine. In vitro, also has serine succinyl transferase activity. The polypeptide is Homoserine O-succinyltransferase (Bordetella petrii (strain ATCC BAA-461 / DSM 12804 / CCUG 43448)).